A 594-amino-acid polypeptide reads, in one-letter code: Golgi-associated RAB2 interactor protein 4 (594 aa).

Residues 390-525 (AAGLPVSTRQ…SSGSSKRLGR (136 aa)) form a disordered region. The span at 396–406 (STRQSKSSLSG) shows a compositional bias: polar residues. Composition is skewed to basic and acidic residues over residues 408 to 433 (HGRE…DKAL), 442 to 455 (TGES…DKIA), and 468 to 477 (ASRDGKKEKG). A compositionally biased stretch (low complexity) spans 510 to 521 (RSSSTTSSGSSK).

This sequence belongs to the GARIN family. In terms of assembly, interacts (via N-terminus) with RAB2B (in GTP-bound form).

It localises to the golgi apparatus. In terms of biological role, RAB2B effector protein required for the compacted Golgi morphology, probably through interaction with small GTPase RAB2B. In Macaca fascicularis (Crab-eating macaque), this protein is Golgi-associated RAB2 interactor protein 4 (GARIN4).